The primary structure comprises 162 residues: Interleukin-15 (162 aa).

Residues 1 to 29 (MRISKPHLRSISIQCYLCLLLKSHFLTEA) form the signal peptide. Residues 30–48 (GIHVFILGCFSAGLPKTEA) constitute a propeptide that is removed on maturation. Disulfide bonds link C83/C133 and C90/C136. N127 is a glycosylation site (N-linked (GlcNAc...) asparagine).

This sequence belongs to the IL-15/IL-21 family.

It localises to the secreted. Its function is as follows. Cytokine that plays a major role in the development of inflammatory and protective immune responses to microbial invaders and parasites by modulating immune cells of both the innate and adaptive immune systems. Stimulates the proliferation of natural killer cells, T-cells and B-cells and promotes the secretion of several cytokines. In monocytes, induces the production of IL8 and monocyte chemotactic protein 1/CCL2, two chemokines that attract neutrophils and monocytes respectively to sites of infection. Unlike most cytokines, which are secreted in soluble form, IL15 is expressed in association with its high affinity IL15RA on the surface of IL15-producing cells and delivers signals to target cells that express IL2RB and IL2RG receptor subunits. Binding to its receptor triggers the phosphorylation of JAK1 and JAK3 and the recruitment and subsequent phosphorylation of signal transducer and activator of transcription-3/STAT3 and STAT5. In mast cells, induces the rapid tyrosine phosphorylation of STAT6 and thereby controls mast cell survival and release of cytokines such as IL4. The protein is Interleukin-15 (IL15) of Chlorocebus aethiops (Green monkey).